The following is a 47-amino-acid chain: Defensin-2 (47 aa).

Cystine bridges form between Cys-3/Cys-47, Cys-14/Cys-35, Cys-20/Cys-41, and Cys-24/Cys-43.

This sequence belongs to the DEFL family. Epidermis and vascular bundles of pods, stems, roots, leaves and wet or dry seeds.

Its function is as follows. Possesses antifungal activity sensitive to inorganic cations. The sequence is that of Defensin-2 from Pisum sativum (Garden pea).